A 2414-amino-acid polypeptide reads, in one-letter code: METGSPGLNMKPQSLQLVLEGQVLALQQQMAENQAASWRKLKNSQEAQKRQATLVRKLQAKVLQYRSWCQDLEKRLEATGGLIPQRWESVEEPNLEQLLIRLEEEQQRCESLVEVNTELRLHMEKADVVNKALQEDVEKLTVDWSRARDELVRKESQWRMEQEFFKGYLRGEHGRLLNLWREVVTFRRHFLKMKSATDRDLTELKAEHARLSGSLLTCCLRLTLRAQSRESSGSGRTEESEPARLLLLVAKTQALEKEAHEKSQELMQLKSHGDLEKAELQDRVTELSALLTQSQKQNEDYEKMVKALRETMEILETNHAELMEHEASLSRNAQEEKLSLQQVIKAITQALASVEEEDTVTQSSGHEDSLQSDCNGLSQFDPQDPDRALTLVQSVLTRRQQAVQDLRQQLSGCQEAMSFLQQQHDQWEEEGRALREKLQKLTGERDALAGQTVGLQGEVDSLSRERELLQKARGELQQQLEVLEQEAWRLRRMNMELQLQGDSAQGEKLEQQEELHLAVRERERLQETLVGLEAKQSESLSELLTLREALESSRLEGELLKQERVEVAAALARAEQSIVELSGSENSLKAEVADLRAAAVKLGALNEALALDKVELNQQLLQLEQENQSLCSRVEAAEQLRSALQVDLAEAERRREALWEKKTQLETQLQKAEEAGAELQAELRGTREEKEELKDKLSEAHHQQETATAHLEQLHQDAERQEETLARAVQEKEALVRERAALEVRLQAVERDRQDLTEHVLGLRSAKEQLESNLFEAQQQNSVIQVTKGQLEVQIQTIIQAKEVIQGEVKCLKLELDAERTRAEQEWDAVARQLAQAEQEGQASLERQKVAHEEEVNRLQEKWEKERSWLQQELDKTLETLERERAELETKLREQQTEMEAIRAQREEERSQADSALYQMQLETEKERVSLLETLLRTQKELADASQQLERLRQDMKIQKLKEQETTGMLQAQLQETQQELKEAAQQHRDDLAAFQKDKLDLQKQVEDLMSQLVAHDDSQRLVKEEIEEKVKVAQECSRIQKELEKENASLALSLVEKEKRLLILQEADSVRQQELSSLRQDIQEAQEGQRELGVQVELLRQEVKEKEADFVAREAQLLEELEASRVAEQQLRASLWAQEAKATQLQLQLRSTESQLEALVAEQQPENQAQAQLASLCSVLQQALGSACESRPELRGGGDSAPTLWGPDPDQNGASRLFKRWSLPTALSPEAVALALQKLHQDVWKARQARDDLRDQVQKLVQRLTDTEAQKSQVHSELQDLQRQLSQSQEEKSKWEGRQNSLESELRDLHETAASLQSRLRQAELQKMEAQNDRELLQASKEKLSAQVEHLQACVAEAQAQADAAAVLEEDLRTARSALKLKNEELESERERAQALQEQGELKVAQGKALQENLALLAQTLSNREREVETLQAEVQELEKQREMQKAALELLSLDLKKRSREVDLQQEQIQELEQCRSVLEHLPMAVQEREQKLSVQRDQIRELENDREAQRSVLEHQLLDLEQKAQVIESQRGQIQDLKKQLGTLECLALELEESHHKVESQQKMITELEGQREMQRVALTHLTLDLEERSQELQAQSSQLHELENHSTHLAKELQERDQEVTSQRQQIDELQKQQEQLAQALERKGQELVLQKERIQVLEDQRTLQTKILEEDLEQIKHSLRERSQELASQWQLVHERADDGKSPSKGQRGSLEHLKLILRDKEKEVECQQERIQELQGHMGQLEQQLQGLHRKVGETSLLLTHREQETATLQQHLQEAKEQGELREQVLQGQLEEAQRDLAQRDHELETLRQEKQQTQDQEESMKLKTSALQAALEQAHATLKERQGELEEHREQVRRLQEELEVEGRQVRALEEVLGDLRAESREHEKAVLALQQRCAEQAQEHEAEARTLQDSWLQAQATLTEQEQELAALRAENQYSRRQEEAAVSQAEALQEALSKAQAALQEKEQSLLEQAELSHTLEASTAALQATLDTCQASARQLEEALRIREGEIQAQALQHHEVTQHLQQELCQKKEELRQLLEKAGARRSQENGIQEKQSLEQERQEETRRLLESLKELQLTVAQREEEILMLREASSPRHRALPAEKPALQPLPAQQELERLQTALRQTEAREIEWREKAQDLALSLAQSKASISSLQEITMFLQASVLERESEQQRLQEELVLSRQALEEQQSGGPHSTSRADQGPKVGQGSQSGEVETEPSPGVEEKERLTQRLERLQQAVAELEVDRSKLQCHNAQLRTALEQVERERRKLKRDSVRASRAGSLEARETMTSSPTQQDGRGSQRGSSDSVLVVELQREVALLRAQLALERKQRQDYIARSVQTSRELAGLHHSLSHSLLTVAQAPEATVLEAETRKLDESLNQSLTSPGPCLLHPSLDTTQNTHR.

Coiled coils occupy residues 91–153 and 248–357; these read EEPN…ELVR and LVAK…VEEE. 7 disordered regions span residues 356-384, 672-707, 1191-1212, 1269-1303, 2050-2071, 2194-2238, and 2275-2317; these read EEDT…DPQD, AEEA…QETA, SRPE…DPDQ, EAQK…QNSL, AGAR…QERQ, ALEE…KERL, and RERR…GSSD. The segment covering 371-381 has biased composition (polar residues); that stretch reads QSDCNGLSQFD. The stretch at 400-1165 forms a coiled coil; that stretch reads QQAVQDLRQQ…QLEALVAEQQ (766 aa). Residues 684-704 show a composition bias toward basic and acidic residues; sequence RGTREEKEELKDKLSEAHHQQ. Coiled-coil stretches lie at residues 1237–2200 and 2231–2290; these read LQKL…EQQS and GVEE…ASRA. A compositionally biased stretch (low complexity) spans 1280–1289; that stretch reads QDLQRQLSQS. Residues 2196–2209 show a composition bias toward polar residues; the sequence is EEQQSGGPHSTSRA. Residues 2275-2286 are compositionally biased toward basic and acidic residues; that stretch reads RERRKLKRDSVR. Serine 2292 is modified (phosphoserine). The segment covering 2305–2317 has biased composition (low complexity); the sequence is QQDGRGSQRGSSD. Residues 2320–2345 are a coiled coil; the sequence is LVVELQREVALLRAQLALERKQRQDY. Phosphoserine; by NEK2 is present on residues serine 2389 and serine 2393. The tract at residues 2390-2414 is disordered; it reads LNQSLTSPGPCLLHPSLDTTQNTHR.

As to quaternary structure, monomer and homodimer. Forms a complex in vitro with both NEK2 kinase and the PPP1CC catalytic subunit of protein phosphatase 1 (PP1). Interacts with CEP135. Interacts with CROCC/rootletin. Interacts with CNTLN. Interacts with NIN (via C-terminus). In terms of processing, differentially phosphorylated during cell cycle. Phosphorylation may regulate association/dissociation from centrosome. During M phase of mitosis, C-terminal part is phosphorylated by NEK2, suggesting that it may trigger the dissociation from the mitotic centrosome. Dephosphorylated in vitro by the PP1 phosphatase. As to expression, expressed in the retina.

It is found in the cytoplasm. The protein localises to the perinuclear region. It localises to the cytoskeleton. Its subcellular location is the microtubule organizing center. The protein resides in the centrosome. It is found in the centriole. The protein localises to the cilium basal body. It localises to the cell projection. Its subcellular location is the cilium. The protein resides in the photoreceptor outer segment. It is found in the photoreceptor inner segment. Its function is as follows. Plays an important role in centrosome cohesion during interphase. Recruits CCDC102B to the proximal ends of centrioles. Maintains centrosome cohesion by forming intercentriolar linkages. Accumulates at the proximal end of each centriole, forming supramolecular assemblies with viscous material properties that promote organelle cohesion. May be involved in ciliogenesis. This Mus musculus (Mouse) protein is Centrosome-associated protein CEP250 (Cep250).